A 1423-amino-acid chain; its full sequence is Guanine nucleotide exchange factor subunit RIC1 (1423 aa).

WD repeat units follow at residues Thr-64–Tyr-103 and Asn-304–Thr-343. Residues Ala-437–Thr-448 are compositionally biased toward polar residues. The tract at residues Ala-437–Asp-463 is disordered. The span at His-449–Pro-460 shows a compositional bias: basic and acidic residues. A phosphothreonine mark is found at Thr-992 and Thr-996. Phosphoserine occurs at positions 1015, 1017, 1019, 1037, and 1172. The disordered stretch occupies residues Pro-1355–Ser-1423. The segment covering Gly-1379–Val-1397 has biased composition (polar residues). A compositionally biased stretch (acidic residues) spans Thr-1404 to Phe-1413.

This sequence belongs to the RIC1 family. As to quaternary structure, forms a complex with RGP1; the interaction enhances RAB6A GTPase activity. Interacts (via central domain) with RGP1. Interacts with RAB6A; the interaction is direct with a preference for RAB6A-GDP. Interacts (via C-terminus domain) with RAB33B; the interaction is direct with a preference for RAB33B-GTP. Interacts with GJA1. Present in kidney and various cell lines (at protein level). Widely expressed at low level.

It localises to the cytoplasm. The protein resides in the cytosol. The protein localises to the membrane. The RIC1-RGP1 complex acts as a guanine nucleotide exchange factor (GEF), which activates RAB6A by exchanging bound GDP for free GTP, and may thereby be required for efficient fusion of endosome-derived vesicles with the Golgi compartment. The RIC1-RGP1 complex participates in the recycling of mannose-6-phosphate receptors. Required for phosphorylation and localization of GJA1. Is a regulator of procollagen transport and secretion, and is required for correct cartilage morphogenesis and development of the craniofacial skeleton. The sequence is that of Guanine nucleotide exchange factor subunit RIC1 from Homo sapiens (Human).